A 126-amino-acid chain; its full sequence is Small ribosomal subunit protein uS12 (126 aa).

The disordered stretch occupies residues 1–28 (MPTINQLVRKGRQSETTKSKSPALQDCP). Asp-89 is modified (3-methylthioaspartic acid). Residues 103 to 126 (DTQGVKDRKQARSKYGAKRAKAAK) are disordered. A compositionally biased stretch (basic residues) spans 113 to 126 (ARSKYGAKRAKAAK).

It belongs to the universal ribosomal protein uS12 family. As to quaternary structure, part of the 30S ribosomal subunit. Contacts proteins S8 and S17. May interact with IF1 in the 30S initiation complex.

Its function is as follows. With S4 and S5 plays an important role in translational accuracy. Functionally, interacts with and stabilizes bases of the 16S rRNA that are involved in tRNA selection in the A site and with the mRNA backbone. Located at the interface of the 30S and 50S subunits, it traverses the body of the 30S subunit contacting proteins on the other side and probably holding the rRNA structure together. The combined cluster of proteins S8, S12 and S17 appears to hold together the shoulder and platform of the 30S subunit. The chain is Small ribosomal subunit protein uS12 from Burkholderia orbicola (strain MC0-3).